Reading from the N-terminus, the 108-residue chain is MEDEEKAVEILGNTEAAHPPSPIRCCWLRLRCLAATSIICGCSCLGVMALVFAIKAEERHKAGRSEEAVRWGARARKLILASFAVWLAVLILGPLLLWLLSYAIAQAE.

The next 2 membrane-spanning stretches (helical) occupy residues 34 to 54 (AATS…VFAI) and 78 to 98 (LILA…LLLW).

It belongs to the CD225/Dispanin family.

The protein localises to the membrane. The protein is Transmembrane protein 265 of Homo sapiens (Human).